Here is a 147-residue protein sequence, read N- to C-terminus: NAD(P)H-quinone oxidoreductase subunit N (147 aa).

The protein belongs to the complex I NdhN subunit family. NDH-1 can be composed of about 15 different subunits; different subcomplexes with different compositions have been identified which probably have different functions.

Its subcellular location is the cellular thylakoid membrane. It catalyses the reaction a plastoquinone + NADH + (n+1) H(+)(in) = a plastoquinol + NAD(+) + n H(+)(out). The enzyme catalyses a plastoquinone + NADPH + (n+1) H(+)(in) = a plastoquinol + NADP(+) + n H(+)(out). In terms of biological role, NDH-1 shuttles electrons from an unknown electron donor, via FMN and iron-sulfur (Fe-S) centers, to quinones in the respiratory and/or the photosynthetic chain. The immediate electron acceptor for the enzyme in this species is believed to be plastoquinone. Couples the redox reaction to proton translocation, and thus conserves the redox energy in a proton gradient. Cyanobacterial NDH-1 also plays a role in inorganic carbon-concentration. The sequence is that of NAD(P)H-quinone oxidoreductase subunit N from Synechococcus sp. (strain JA-3-3Ab) (Cyanobacteria bacterium Yellowstone A-Prime).